A 318-amino-acid chain; its full sequence is DNA-directed RNA polymerase subunit alpha (318 aa).

An alpha N-terminal domain (alpha-NTD) region spans residues 1 to 227 (MTQFEIECLD…NLFSPLKTID (227 aa)). Positions 241–318 (HINQILIEEL…KEKTTKIYNK (78 aa)) are alpha C-terminal domain (alpha-CTD).

Belongs to the RNA polymerase alpha chain family. In terms of assembly, in plastids the minimal PEP RNA polymerase catalytic core is composed of four subunits: alpha, beta, beta', and beta''. When a (nuclear-encoded) sigma factor is associated with the core the holoenzyme is formed, which can initiate transcription.

It is found in the plastid. The protein localises to the chloroplast. It carries out the reaction RNA(n) + a ribonucleoside 5'-triphosphate = RNA(n+1) + diphosphate. Functionally, DNA-dependent RNA polymerase catalyzes the transcription of DNA into RNA using the four ribonucleoside triphosphates as substrates. This is DNA-directed RNA polymerase subunit alpha from Guillardia theta (Cryptophyte).